The primary structure comprises 361 residues: GTPase Obg (361 aa).

An Obg domain is found at 1–159 (MKFVDEAFID…KNLKLELKVL (159 aa)). Positions 160 to 334 (ADVGLLGMPN…LIKTIYQHVK (175 aa)) constitute an OBG-type G domain. Residues 166 to 173 (GMPNAGKS), 191 to 195 (FTTLH), 213 to 216 (DLPG), 284 to 287 (NKLD), and 315 to 317 (SAL) contribute to the GTP site. The Mg(2+) site is built by Ser173 and Thr193. The segment at 339–361 (SEQPVEEVDPRFVPLPPESPETP) is disordered. A compositionally biased stretch (pro residues) spans 351-361 (VPLPPESPETP).

The protein belongs to the TRAFAC class OBG-HflX-like GTPase superfamily. OBG GTPase family. In terms of assembly, monomer. The cofactor is Mg(2+).

The protein localises to the cytoplasm. In terms of biological role, an essential GTPase which binds GTP, GDP and possibly (p)ppGpp with moderate affinity, with high nucleotide exchange rates and a fairly low GTP hydrolysis rate. Plays a role in control of the cell cycle, stress response, ribosome biogenesis and in those bacteria that undergo differentiation, in morphogenesis control. This is GTPase Obg from Polaromonas sp. (strain JS666 / ATCC BAA-500).